A 387-amino-acid polypeptide reads, in one-letter code: Small ribosomal subunit protein mS31 (387 aa).

Residues 1–56 constitute a mitochondrion transit peptide; it reads MLHRIPAFIRPRPFSGLPLSCGNREVSVAASVLPAAGSGAVRTENTIQRHFCTSRS. Disordered regions lie at residues 59-83 and 203-228; these read SKKD…GEGK and KSPS…SSLS. Composition is skewed to polar residues over residues 66–76 and 207–217; these read VPANETSQKAA and MRVSSRPQHQI.

The protein belongs to the mitochondrion-specific ribosomal protein mS31 family. Component of the mitochondrial ribosome small subunit (28S) which comprises a 12S rRNA and about 30 distinct proteins.

The protein resides in the mitochondrion. This Rattus norvegicus (Rat) protein is Small ribosomal subunit protein mS31 (Mrps31).